A 566-amino-acid chain; its full sequence is Arginine--tRNA ligase (566 aa).

Positions 123-133 (PNIAKPFHIGH) match the 'HIGH' region motif.

It belongs to the class-I aminoacyl-tRNA synthetase family. In terms of assembly, monomer.

The protein localises to the cytoplasm. It catalyses the reaction tRNA(Arg) + L-arginine + ATP = L-arginyl-tRNA(Arg) + AMP + diphosphate. This is Arginine--tRNA ligase from Halothermothrix orenii (strain H 168 / OCM 544 / DSM 9562).